Reading from the N-terminus, the 115-residue chain is Photosystem II reaction center Psb28 protein (115 aa).

This sequence belongs to the Psb28 family. As to quaternary structure, part of the photosystem II complex.

The protein resides in the plastid. It localises to the chloroplast thylakoid membrane. This chain is Photosystem II reaction center Psb28 protein, found in Phaeodactylum tricornutum (strain CCAP 1055/1).